The chain runs to 223 residues: Putative thymidylate synthase (223 aa).

Cys-146 is a catalytic residue.

This sequence belongs to the thymidylate synthase family. Archaeal-type ThyA subfamily. As to quaternary structure, monomer.

The protein resides in the cytoplasm. Its pathway is pyrimidine metabolism; dTTP biosynthesis. In terms of biological role, may catalyze the biosynthesis of dTMP using an unknown cosubstrate. In vitro, also catalyzes the dehalogenation of 5-bromo-deoxyuridine monophosphate (Br-dUMP) and the tritium exchange of [5-3H]deoxyuridine monophosphate ([5-3H]dUMP). This chain is Putative thymidylate synthase (thyA), found in Methanothermobacter marburgensis (strain ATCC BAA-927 / DSM 2133 / JCM 14651 / NBRC 100331 / OCM 82 / Marburg) (Methanobacterium thermoautotrophicum).